The chain runs to 355 residues: Glucose-6-phosphatase 2 (355 aa).

Residues 1 to 24 are Lumenal-facing; the sequence is MDFLHRNGVLIIQHLQKDYRAYYT. A helical transmembrane segment spans residues 25-45; that stretch reads FLNFMSNVGDPRNIFFIYFPL. Topologically, residues 46–56 are cytoplasmic; that stretch reads CFQFNQTVGTK. Residues 57-77 traverse the membrane as a helical segment; the sequence is MIWVAVIGDWLNLIFKWILFG. The Lumenal segment spans residues 78–115; it reads HRPYWWVQETQIYPNHSSPCLEQFPTTCETGPGSPSGH. A substrate-binding site is contributed by Arg79. Residue Asn92 is glycosylated (N-linked (GlcNAc...) asparagine). His115 functions as the Proton donor in the catalytic mechanism. A helical transmembrane segment spans residues 116–136; sequence AMGASCVWYVMVTAALSHTVC. The Cytoplasmic segment spans residues 137 to 146; that stretch reads GMDKFSITLH. Residues 147–167 form a helical membrane-spanning segment; it reads RLTWSFLWSVFWLIQISVCIS. Residue Arg168 is a topological domain, lumenal. Residue Arg168 participates in substrate binding. Residues 169–189 traverse the membrane as a helical segment; it reads VFIATHFPHQVILGVIGGMLV. Residue His174 is the Nucleophile of the active site. Topologically, residues 190–211 are cytoplasmic; the sequence is AEAFEHTPGIQTASLGTYLKTN. Residues 212–232 form a helical membrane-spanning segment; the sequence is LFLFLFAVGFYLLLRVLNIDL. Residues 233–261 are Lumenal-facing; sequence LWSVPIAKKWCANPDWIHIDTTPFAGLVR. The helical transmembrane segment at 262–282 threads the bilayer; that stretch reads NLGVLFGLGFAINSEMFLLSC. Topologically, residues 283 to 293 are cytoplasmic; it reads RGGNNYTLSFR. Residues 294 to 314 form a helical membrane-spanning segment; sequence LLCALTSLTILQLYHFLQIPT. The Lumenal segment spans residues 315 to 318; the sequence is HEEH. The chain crosses the membrane as a helical span at residues 319–339; it reads LFYVLSFCKSASIPLTVVAFI. Residues 340-355 lie on the Cytoplasmic side of the membrane; it reads PYSVHMLMKQSGKKSQ. The Prevents secretion from ER motif lies at 352–355; that stretch reads KKSQ.

It belongs to the glucose-6-phosphatase family. N-glycosylated; the non-glycosylated form is more unstable and is degraded through the proteasome. In terms of tissue distribution, specifically expressed in pancreas and also detected to a lower extent in testis. Expressed by most islet cells in the pancreas (at protein level).

The protein localises to the endoplasmic reticulum membrane. The catalysed reaction is D-glucose 6-phosphate + H2O = D-glucose + phosphate. Its pathway is carbohydrate biosynthesis; gluconeogenesis. Its function is as follows. May hydrolyze glucose-6-phosphate to glucose in the endoplasmic reticulum. May be responsible for glucose production through glycogenolysis and gluconeogenesis. This chain is Glucose-6-phosphatase 2 (G6PC2), found in Homo sapiens (Human).